The primary structure comprises 386 residues: L-lactate oxidase (386 aa).

The FMN hydroxy acid dehydrogenase domain occupies 16–382 (AQAPFPICFA…RTITLVKNDG (367 aa)). A pyruvate-binding site is contributed by Tyr-42. Residues 95 to 97 (PVG), Ser-124, and Gln-146 contribute to the FMN site. Tyr-148 provides a ligand contact to pyruvate. Thr-174 is an FMN binding site. Arg-183 lines the pyruvate pocket. Lys-253 and Ser-275 together coordinate FMN. Pyruvate is bound by residues His-277 and Arg-280. The active-site Proton acceptor is His-277. FMN-binding positions include 308-312 (DSGVY) and Arg-332.

This sequence belongs to the FMN-dependent alpha-hydroxy acid dehydrogenase family. In terms of assembly, homotetramer. It depends on FMN as a cofactor.

It catalyses the reaction a (2S)-2-hydroxycarboxylate + O2 = a 2-oxocarboxylate + H2O2. It carries out the reaction (S)-lactate + O2 = pyruvate + H2O2. The catalysed reaction is 2-hydroxyoctanoate + O2 = 2-oxooctanoate + H2O2. The enzyme catalyses mandelate + O2 = phenylglyoxylate + H2O2. It catalyses the reaction 2-hydroxyoctadecanoate + O2 = 2-oxooctadecanoate + H2O2. It carries out the reaction (S)-2-hydroxyglutarate + O2 = H2O2 + 2-oxoglutarate. Oxidase that catalyzes the oxidation of a broad range of 2-hydroxyacids in vitro, such as (S)-lactate, 2-hydroxyoctanoate, mandelate, 2-hydroxyoctadecanoate and (S)-2-hydroxyglutarate, to the corresponding 2-oxoacids, with a reduction of O2 to H2O2. May be involved in the utilization of L-lactate as an energy source for growth. The sequence is that of L-lactate oxidase from Lysinibacillus sphaericus (strain C3-41).